The chain runs to 575 residues: CCR4-NOT transcription complex subunit 4 (575 aa).

An RING-type; degenerate zinc finger spans residues 14–57 (CPLCMEPLEIDDINFFPCTCGYQICRFCWHRIRTDENGLCPACR). Positions 68-104 (KPLSQEELQRIKNEKKQKQNERKQKISENRKHLASVR) form a coiled coil. Ser71 carries the post-translational modification Phosphoserine. The 81-residue stretch at 109 to 189 (NLVFVVGLSQ…VVDGRTLKAS (81 aa)) folds into the RRM domain. Residues 190–217 (LGTTKYCSYFLKNMQCPKPDCMYLHELG) form a C3H1-type zinc finger. Disordered stretches follow at residues 256–372 (TGSV…EPQS) and 424–458 (SVQD…HPAA). The segment covering 281 to 299 (DSLSIGNGDNSQQISNSDT) has biased composition (polar residues). Ser301 is subject to Phosphoserine. Residues 307-322 (SKSNPVIPISSSNHSA) show a composition bias toward polar residues. Phosphoserine is present on Ser324. Over residues 345–356 (NPIPSGLPPFPS) the composition is skewed to pro residues. The segment covering 428–441 (QPSLSPTSLQNSSS) has biased composition (low complexity). At Ser432 the chain carries Phosphoserine. Arg475 and Arg483 each carry asymmetric dimethylarginine. Residue Ser490 is modified to Phosphoserine. Position 497 is an asymmetric dimethylarginine (Arg497). The segment at 553–575 (PLSTSSHSLQQGQQPTSLHTTVA) is disordered.

Interacts with CNOT1 via its C-terminus but does not stably associate with the CCR4-NOT complex. Interacts (via RING domain) with UBE2D2. Interacts with ABCE1, PINK1 and PELO. In terms of processing, autoubiquitinated.

It localises to the cytoplasm. The protein resides in the nucleus. It carries out the reaction S-ubiquitinyl-[E2 ubiquitin-conjugating enzyme]-L-cysteine + [acceptor protein]-L-lysine = [E2 ubiquitin-conjugating enzyme]-L-cysteine + N(6)-ubiquitinyl-[acceptor protein]-L-lysine.. It functions in the pathway protein modification; protein ubiquitination. In terms of biological role, has E3 ubiquitin ligase activity, promoting ubiquitination and degradation of target proteins. Involved in activation of the JAK/STAT pathway. Catalyzes ubiquitination of methylated RBM15. Plays a role in quality control of translation of mitochondrial outer membrane-localized mRNA. As part of the PINK1-regulated signaling, upon mitochondria damage, ubiquitinates ABCE1 and thereby recruits autophagy receptors to the mitochondrial outer membrane to initiate mitophagy. This chain is CCR4-NOT transcription complex subunit 4 (CNOT4), found in Homo sapiens (Human).